The primary structure comprises 394 residues: 1-deoxy-D-xylulose 5-phosphate reductoisomerase (394 aa).

NADPH is bound by residues Thr14, Gly15, Ser16, Ile17, Gly40, and Asn128. Lys129 is a 1-deoxy-D-xylulose 5-phosphate binding site. Glu130 is a binding site for NADPH. Position 154 (Asp154) interacts with Mn(2+). Residues Ser155, Glu156, Ser180, and His203 each coordinate 1-deoxy-D-xylulose 5-phosphate. Residue Glu156 coordinates Mn(2+). Gly209 serves as a coordination point for NADPH. The 1-deoxy-D-xylulose 5-phosphate site is built by Ser216, Asn221, Lys222, and Glu225. Residue Glu225 coordinates Mn(2+).

It belongs to the DXR family. It depends on Mg(2+) as a cofactor. Requires Mn(2+) as cofactor.

It catalyses the reaction 2-C-methyl-D-erythritol 4-phosphate + NADP(+) = 1-deoxy-D-xylulose 5-phosphate + NADPH + H(+). It participates in isoprenoid biosynthesis; isopentenyl diphosphate biosynthesis via DXP pathway; isopentenyl diphosphate from 1-deoxy-D-xylulose 5-phosphate: step 1/6. Its function is as follows. Catalyzes the NADPH-dependent rearrangement and reduction of 1-deoxy-D-xylulose-5-phosphate (DXP) to 2-C-methyl-D-erythritol 4-phosphate (MEP). This is 1-deoxy-D-xylulose 5-phosphate reductoisomerase from Xylella fastidiosa (strain M23).